A 104-amino-acid chain; its full sequence is Large ribosomal subunit protein uL24 (104 aa).

It belongs to the universal ribosomal protein uL24 family. As to quaternary structure, part of the 50S ribosomal subunit.

One of two assembly initiator proteins, it binds directly to the 5'-end of the 23S rRNA, where it nucleates assembly of the 50S subunit. In terms of biological role, one of the proteins that surrounds the polypeptide exit tunnel on the outside of the subunit. This Shewanella sp. (strain W3-18-1) protein is Large ribosomal subunit protein uL24.